Here is a 220-residue protein sequence, read N- to C-terminus: Ripening-related protein grip22 (220 aa).

Residues 1-27 (MAKSALVWLASVCLVFNILSLPFLALG) form the signal peptide.

It belongs to the kiwellin family. As to expression, expressed in ripening fruits.

It is found in the secreted. This is Ripening-related protein grip22 (grip22) from Vitis vinifera (Grape).